Here is a 149-residue protein sequence, read N- to C-terminus: Transcriptional repressor NrdR (149 aa).

The segment at 3 to 34 (CPFCDTEETKVIDSRLVSDGYQVRRRRECGHC) is a zinc-finger region. Residues 49–139 (PKIIKTDGTR…VYLSFDDIDQ (91 aa)) enclose the ATP-cone domain.

Belongs to the NrdR family. The cofactor is Zn(2+).

Its function is as follows. Negatively regulates transcription of bacterial ribonucleotide reductase nrd genes and operons by binding to NrdR-boxes. The polypeptide is Transcriptional repressor NrdR (Haemophilus influenzae (strain PittEE)).